A 232-amino-acid polypeptide reads, in one-letter code: 7-cyano-7-deazaguanine synthase (232 aa).

8–18 (FSGGQDSTTCL) serves as a coordination point for ATP. Zn(2+)-binding residues include Cys187, Cys196, Cys199, and Cys202.

This sequence belongs to the QueC family. Requires Zn(2+) as cofactor.

The catalysed reaction is 7-carboxy-7-deazaguanine + NH4(+) + ATP = 7-cyano-7-deazaguanine + ADP + phosphate + H2O + H(+). It functions in the pathway purine metabolism; 7-cyano-7-deazaguanine biosynthesis. In terms of biological role, catalyzes the ATP-dependent conversion of 7-carboxy-7-deazaguanine (CDG) to 7-cyano-7-deazaguanine (preQ(0)). The sequence is that of 7-cyano-7-deazaguanine synthase from Shewanella denitrificans (strain OS217 / ATCC BAA-1090 / DSM 15013).